We begin with the raw amino-acid sequence, 68 residues long: Peptide Smp13 (68 aa).

The signal sequence occupies residues 1–23 (MKTQFAIFLITLVLFQMFSQSDA). Phe-36 bears the Phenylalanine amide mark. A propeptide spanning residues 37–68 (GKRGLGDHDDLDELFDGEISQADIDFLKEIMQ) is cleaved from the precursor.

It belongs to the non-disulfide-bridged peptide (NDBP) superfamily. Short antimicrobial peptide (group 4) family. Expressed by the venom gland.

The protein resides in the secreted. Its function is as follows. Peptide with unknown function. Does not show antimicrobial activity against the Gram-positive, and Gram-negative bacteria tested, as well as against the fungus C.albicans. The protein is Peptide Smp13 of Scorpio palmatus (Israeli golden scorpion).